The primary structure comprises 154 residues: Lipoprotein signal peptidase (154 aa).

The next 2 membrane-spanning stretches (helical) occupy residues 57–77 and 86–103; these read LVLS…MIKY and ISLS…YDRV. Residues D110 and D129 contribute to the active site. The chain crosses the membrane as a helical span at residues 124–144; the sequence is VFNVADICVVVGTIMIAIFIV.

The protein belongs to the peptidase A8 family.

It is found in the cell membrane. The catalysed reaction is Release of signal peptides from bacterial membrane prolipoproteins. Hydrolyzes -Xaa-Yaa-Zaa-|-(S,diacylglyceryl)Cys-, in which Xaa is hydrophobic (preferably Leu), and Yaa (Ala or Ser) and Zaa (Gly or Ala) have small, neutral side chains.. It participates in protein modification; lipoprotein biosynthesis (signal peptide cleavage). Its function is as follows. This protein specifically catalyzes the removal of signal peptides from prolipoproteins. This is Lipoprotein signal peptidase from Clostridium acetobutylicum (strain ATCC 824 / DSM 792 / JCM 1419 / IAM 19013 / LMG 5710 / NBRC 13948 / NRRL B-527 / VKM B-1787 / 2291 / W).